Reading from the N-terminus, the 367-residue chain is Peptide chain release factor 2 (367 aa).

Glutamine 254 is subject to N5-methylglutamine.

It belongs to the prokaryotic/mitochondrial release factor family. Methylated by PrmC. Methylation increases the termination efficiency of RF2.

It localises to the cytoplasm. Its function is as follows. Peptide chain release factor 2 directs the termination of translation in response to the peptide chain termination codons UGA and UAA. This Aromatoleum aromaticum (strain DSM 19018 / LMG 30748 / EbN1) (Azoarcus sp. (strain EbN1)) protein is Peptide chain release factor 2.